A 523-amino-acid chain; its full sequence is MELTLWTYEGPPHVGAMRIASSMKDIHYVLHAPQGDTYADLLFTMIERRGQRPPVTYTTFQARDLGGDTAELVKKNIKEAVERFKPKTLLVGESCTAELIQDQPGALAKGMGFDMPIVNLELPAYSKKENWGASETFYQLTRTLLKEKVGSSEKISPLRWKELGRRPKVNILGPSLLGFRCRDDVIEIQRILSEQGIDTNVVAPLGANPNDIERLIDAEINICLYQEIAEASCEWLKRNFGMEYTNTIPIGIKNTIEFINEVHNKLDLPLTNKKELEHKSKLPWYSKSVDSNYLTGKRVFIFGDGTHAIAAAKIAKDELGFEVVGIGTYSREMARQVRATAKELNVEALITNNYLEVEDAMKKAAPELVLGTQMERHSAKRLGIPCAVISTPMHVQDVPARYSPQMGWEGANVIFDDWVHPLMMGLEEHLIDMFKHDFEFVDGHQSHLGHTATKTKDLINSDNKKDNNPKEGIIWTESGRAELTKVPFFVRGKVKTNTEKYAILRGIPEISDETLYDAKAYFS.

Residue D36 participates in [4Fe-4S] cluster binding. The active-site Proton donor is the D290. 425-426 (GL) contacts substrate.

This sequence belongs to the ChlB/BchB/BchZ family. Protochlorophyllide reductase is composed of three subunits; ChlL, ChlN and ChlB. Forms a heterotetramer of two ChlB and two ChlN subunits. [4Fe-4S] cluster serves as cofactor.

It catalyses the reaction chlorophyllide a + oxidized 2[4Fe-4S]-[ferredoxin] + 2 ADP + 2 phosphate = protochlorophyllide a + reduced 2[4Fe-4S]-[ferredoxin] + 2 ATP + 2 H2O. The protein operates within porphyrin-containing compound metabolism; chlorophyll biosynthesis (light-independent). Component of the dark-operative protochlorophyllide reductase (DPOR) that uses Mg-ATP and reduced ferredoxin to reduce ring D of protochlorophyllide (Pchlide) to form chlorophyllide a (Chlide). This reaction is light-independent. The NB-protein (ChlN-ChlB) is the catalytic component of the complex. The protein is Light-independent protochlorophyllide reductase subunit B of Prochlorococcus marinus (strain MIT 9215).